Here is a 250-residue protein sequence, read N- to C-terminus: Triosephosphate isomerase, cytosolic (250 aa).

The substrate site is built by Asn-1 and Lys-3. His-87 functions as the Electrophile in the catalytic mechanism. Glu-160 (proton acceptor) is an active-site residue.

Belongs to the triosephosphate isomerase family. In terms of assembly, homodimer.

Its subcellular location is the cytoplasm. It catalyses the reaction D-glyceraldehyde 3-phosphate = dihydroxyacetone phosphate. It participates in carbohydrate biosynthesis; gluconeogenesis. Its pathway is carbohydrate degradation; glycolysis; D-glyceraldehyde 3-phosphate from glycerone phosphate: step 1/1. In Gracilaria gracilis (Red alga), this protein is Triosephosphate isomerase, cytosolic (TPI1).